A 350-amino-acid polypeptide reads, in one-letter code: MKQKIIIFGGSFDPIHNAHLYIAKHAIKKIKAQKLFFVPTYNGIFKNNFHASNKDRIAMLKLAIKSVNNALVSNFDIKTKNAFSINTVNHFKSCYPTSEIYFLIGSDKLNELEKWDHIQQLKDLCTFVCYERKPYPFNKKIANQFNVKYLAKCPLEIASSKLLNQPRKKLIPLAVLNYINTNHLYLIPTLKAMVDDKRFQHCLRVGKLAKQLAIANKLDAKRAFVAGAYHDLAKQLPVDQLVNIATSELKITNYPSWKVLHSYVGAYILKNWFGVKDKMIINAIKNHTIPPKQVSKLDMIVYLADKLEPNRKQEQWSGGIEIDQLVKLAKSNLKQAYLITLKYVQNLVKD.

Residues 1 to 187 (MKQKIIIFGG…YINTNHLYLI (187 aa)) are naMN adenylyltransferase. Residues 196 to 350 (DKRFQHCLRV…LKYVQNLVKD (155 aa)) are ap4A hydrolase. One can recognise an HD domain in the interval 198–310 (RFQHCLRVGK…VYLADKLEPN (113 aa)). Histidine 201 contributes to the ADP binding site. Histidine 201, histidine 230, and aspartate 231 together coordinate Fe cation. Residues 231-234 (DLAK), histidine 261, 287-288 (HT), aspartate 305, and arginine 311 each bind ADP. Aspartate 305 is a binding site for Fe cation.

It in the N-terminal section; belongs to the NadD family. The protein in the C-terminal section; belongs to the Ap4A hydrolase YqeK family.

It catalyses the reaction nicotinate beta-D-ribonucleotide + ATP + H(+) = deamido-NAD(+) + diphosphate. The enzyme catalyses P(1),P(4)-bis(5'-adenosyl) tetraphosphate + H2O = 2 ADP + 2 H(+). Its pathway is cofactor biosynthesis; NAD(+) biosynthesis; deamido-NAD(+) from nicotinate D-ribonucleotide: step 1/1. Functionally, catalyzes the reversible adenylation of nicotinate mononucleotide (NaMN) to nicotinic acid adenine dinucleotide (NaAD). In terms of biological role, hydrolyzes diadenosine 5',5'''-P1,P4-tetraphosphate (Ap4A) to yield ADP. This chain is Probable nicotinate-nucleotide adenylyltransferase/Ap4A hydrolase, found in Mycoplasma genitalium (strain ATCC 33530 / DSM 19775 / NCTC 10195 / G37) (Mycoplasmoides genitalium).